Consider the following 116-residue polypeptide: M-zodatoxin-Lt6a/c (116 aa).

An N-terminal signal peptide occupies residues 1–22; it reads MKYFVVALTLAVAFVCIEECKT. 2 propeptides span residues 23 to 44 and 80 to 83; these read VEIG…DEAR and EEAR. 2 consecutive short sequence motifs (processing quadruplet motif) follow at residues 41 to 44 and 80 to 83; these read DEAR and EEAR. Gln-84 carries the pyrrolidone carboxylic acid modification.

The protein belongs to the cationic peptide 03 (latarcin) family. 06 subfamily. Post-translationally, cleavage of the propeptide depends on the processing quadruplet motif (XXXR, with at least one of X being E). Expressed by the venom gland.

Its subcellular location is the secreted. In terms of biological role, does not have antimicrobial activity against Gram-positive bacteria (A.globiformis VKM Ac-1112 (MIC&gt;70 uM) and B.subtilis VKM B-501 (MIC&gt;70 uM)), Gram-negative bacteria (E.coli DH5-alpha (MIC&gt;70 uM), E.coli MH1 (MIC&gt;70 uM) and P.aeruginosa PAO1 (MIC&gt;70 uM)), yeast (P.pastoris GS115 (MIC&gt;70 uM) or S.cerevisiae Y190 (MIC&gt;70 uM)). Does not have hemolytic activity against rabbit erythrocytes. However, it causes some conductance changes in planar bilayer membranes, without membrane rupture, suggesting a cytolytic function on other biological targets. It causes paralysis, but is not lethal when injected into insect larvae. The polypeptide is M-zodatoxin-Lt6a/c (Lachesana tarabaevi (Spider)).